A 245-amino-acid polypeptide reads, in one-letter code: Thiopurine S-methyltransferase (245 aa).

29–40 (WREKWVDGKIGF) is an S-adenosyl-L-methionine binding site. Phe40 is a binding site for substrate. Position 58 is an N6-acetyllysine (Lys58). Residues Leu69, Glu90, and Arg152 each contribute to the S-adenosyl-L-methionine site.

It belongs to the class I-like SAM-binding methyltransferase superfamily. TPMT family. In terms of assembly, monomer.

The protein localises to the cytoplasm. It carries out the reaction S-adenosyl-L-methionine + a thiopurine = S-adenosyl-L-homocysteine + a thiopurine S-methylether.. In Panthera pardus (Leopard), this protein is Thiopurine S-methyltransferase (TPMT).